A 356-amino-acid chain; its full sequence is Malate dehydrogenase, glyoxysomal (356 aa).

The transit peptide at 1–36 directs the protein to the glyoxysome; sequence MQPIPDVNQRIARISAHLHPPKYQMEESSVLRRANC. Residues 51–57 and aspartate 77 each bind NAD(+); that span reads GAAGGIG. Residues arginine 124 and arginine 130 each coordinate substrate. NAD(+) is bound by residues asparagine 137 and 160–162; that span reads ISN. Substrate-binding residues include asparagine 162 and arginine 196. Histidine 220 functions as the Proton acceptor in the catalytic mechanism. Methionine 271 is a binding site for NAD(+).

It belongs to the LDH/MDH superfamily. MDH type 1 family. Homodimer.

It is found in the glyoxysome. It catalyses the reaction (S)-malate + NAD(+) = oxaloacetate + NADH + H(+). This Cucumis sativus (Cucumber) protein is Malate dehydrogenase, glyoxysomal (MDHG).